An 801-amino-acid chain; its full sequence is Cation/H(+) antiporter 28 (801 aa).

The next 12 membrane-spanning stretches (helical) occupy residues 24-44, 77-97, 113-133, 140-160, 179-199, 216-236, 252-272, 275-292, 304-324, 343-363, 371-391, and 403-423; these read ALKI…HYLM, SITL…VMGL, FIAY…TPFL, PYIF…PILT, AAGV…FIFF, LLMF…SPIF, GSHL…PTWP, SMYN…FLPN, INYL…GFII, LLGT…LLLG, SLGL…ALAI, and LIIF…MDII.

It belongs to the monovalent cation:proton antiporter 2 (CPA2) transporter (TC 2.A.37) family. CHX (TC 2.A.37.4) subfamily. Specifically expressed in pollen.

Its subcellular location is the membrane. Its function is as follows. May operate as a cation/H(+) antiporter. This is Cation/H(+) antiporter 28 (CHX28) from Arabidopsis thaliana (Mouse-ear cress).